We begin with the raw amino-acid sequence, 340 residues long: DNA-directed RNA polymerase subunit alpha (340 aa).

The segment at 1–236 is alpha N-terminal domain (alpha-NTD); sequence MLSLSKNWNT…EQLQLFISFE (236 aa). Residues 251-340 are alpha C-terminal domain (alpha-CTD); it reads FSPYLLKRVD…LSKRYEDSYN (90 aa).

It belongs to the RNA polymerase alpha chain family. As to quaternary structure, homodimer. The RNAP catalytic core consists of 2 alpha, 1 beta, 1 beta' and 1 omega subunit. When a sigma factor is associated with the core the holoenzyme is formed, which can initiate transcription.

It catalyses the reaction RNA(n) + a ribonucleoside 5'-triphosphate = RNA(n+1) + diphosphate. Its function is as follows. DNA-dependent RNA polymerase catalyzes the transcription of DNA into RNA using the four ribonucleoside triphosphates as substrates. In Rickettsia rickettsii (strain Iowa), this protein is DNA-directed RNA polymerase subunit alpha.